A 140-amino-acid chain; its full sequence is Peptide methionine sulfoxide reductase MsrB (140 aa).

Residues aspartate 9–glutamate 131 form the MsrB domain. 4 residues coordinate Zn(2+): cysteine 48, cysteine 51, cysteine 97, and cysteine 100. Cysteine 120 (nucleophile) is an active-site residue.

It belongs to the MsrB Met sulfoxide reductase family. The cofactor is Zn(2+).

The catalysed reaction is L-methionyl-[protein] + [thioredoxin]-disulfide + H2O = L-methionyl-(R)-S-oxide-[protein] + [thioredoxin]-dithiol. The sequence is that of Peptide methionine sulfoxide reductase MsrB from Cellvibrio japonicus (strain Ueda107) (Pseudomonas fluorescens subsp. cellulosa).